Here is a 432-residue protein sequence, read N- to C-terminus: N-acylneuraminate cytidylyltransferase (432 aa).

An N-acetylmethionine modification is found at Met1. The interval 1-38 is disordered; sequence MDALEKGAATSGPAPRGRPSRGRPPKLQRSRGAGRGLE. Positions 15–31 match the BC1 motif motif; the sequence is PRGRPSRGRPPKLQRSR. The segment covering 18–29 has biased composition (basic residues); the sequence is RPSRGRPPKLQR. An omega-N-methylarginine mark is found at Arg35 and Arg50. Positions 50, 60, 109, 118, 120, and 141 each coordinate substrate. A BC2 motif motif is present at residues 198–204; the sequence is KRPRRQD. Arg199 is a catalytic residue. The BC3 motif motif lies at 267–274; the sequence is KEKLKEIK.

The protein belongs to the CMP-NeuNAc synthase family. As to quaternary structure, homotetramer; the active enzyme is formed by a dimer of dimers. As to expression, liver.

Its subcellular location is the nucleus. The catalysed reaction is an N-acylneuraminate + CTP = a CMP-N-acyl-beta-neuraminate + diphosphate. The protein operates within amino-sugar metabolism; N-acetylneuraminate metabolism. Catalyzes the activation of N-acetylneuraminic acid (NeuNAc) to cytidine 5'-monophosphate N-acetylneuraminic acid (CMP-NeuNAc), a substrate required for the addition of sialic acid. Has some activity toward NeuNAc, N-glycolylneuraminic acid (Neu5Gc) or 2-keto-3-deoxy-D-glycero-D-galacto-nononic acid (KDN). The protein is N-acylneuraminate cytidylyltransferase (Cmas) of Rattus norvegicus (Rat).